Consider the following 850-residue polypeptide: Protein stoned-A (850 aa).

Basic residues predominate over residues 1-16; that stretch reads MLKLPKGLKKKKKKSK. 2 disordered regions span residues 1–95 and 125–164; these read MLKL…AAGG and KESFYQRLPSAAEKKKQKEEEAARLEAEQQEREKQRLGQI. The tract at residues 26 to 290 is interaction with Syt; it reads ELEQYKRDLK…QNLLLSESIE (265 aa). Over residues 28–38 the composition is skewed to basic and acidic residues; sequence EQYKRDLKAKQ. Residues 78–91 show a composition bias toward polar residues; the sequence is ILNAQQQLSDQNQG. A compositionally biased stretch (basic and acidic residues) spans 136 to 164; sequence AEKKKQKEEEAARLEAEQQEREKQRLGQI. Residues 224–226 carry the DPF 1 motif; sequence DPF. Disordered stretches follow at residues 345-375 and 412-498; these read EEEELEQKGRENQLLNPDLSEFDSLKDEEDD and GSWA…PPFL. Residues 431–440 show a composition bias toward pro residues; that stretch reads PPPPVRPPTG. Acidic residues predominate over residues 451–462; that stretch reads SEDEEENPEDDP. 2 short sequence motifs (DPF) span residues 461-463 and 535-537; these read DPF. Disordered stretches follow at residues 573 to 610, 634 to 673, 738 to 760, and 800 to 825; these read HSLSDQDFDPRADQKEPAAPQVKLEQKETDFDTAQRKS, GNELGASKKPLTPYYAPSDNRLQEREREAEDVDPFDTSHV, RKKLTNSGGSGKSEEDIDPFDTS, and LGLGDKVLTPSTHSRPSLPAQDIDPF. Composition is skewed to basic and acidic residues over residues 574–588 and 596–607; these read SLSDQDFDPRADQKE and LEQKETDFDTAQ. 3 consecutive short sequence motifs (DPF) follow at residues 666 to 668, 755 to 757, and 823 to 825; these read DPF.

In terms of assembly, interacts with the second C2 domain of Syt.

The protein resides in the cytoplasm. Its subcellular location is the synapse. It localises to the cytoplasmic vesicle. It is found in the secretory vesicle. The protein localises to the synaptic vesicle. Functionally, adapter protein involved in endocytic recycling of synaptic vesicles membranes. May act by mediating the retrieval of synaptotagmin protein Syt from the plasma membrane, thereby facilitating the internalization of multiple synaptic vesicles from the plasma membrane. This Drosophila melanogaster (Fruit fly) protein is Protein stoned-A (stnA).